The chain runs to 402 residues: MPEVKVLAVRELTAYLQRLLANDGRLANVWVKGEISNLRSPTSGHLYFSLKDQAATLRCVMFQGRSRGLSLGLRDGLEVIARGQVAIYPRDGVYQLYVAEIFPAGTGLASLALQELTARLEREGLFAADRKRPLPLLPRRVGLVTSPTGAALRDMITISRRRFPGIELILAPARVQGEVAPRQLALALELLAKRGGVDVIIIGRGGGSAEDLSAFNTELVARAIYACPVPVIAAVGHETDLTLADRVADRRAPTPSAAAEMAVPVRAELEQRLKSLAERARRGMEHRLELARARLERLTKSSGLDRPRQELYYRQQYVDGLEQRLLASWERRSREREQGLNLLAARLEAASPLAILARGYAVCRRPGDGAPLKSSREVLPGEKVEVILKEGLLRCQVEEVGG.

This sequence belongs to the XseA family. In terms of assembly, heterooligomer composed of large and small subunits.

The protein resides in the cytoplasm. It carries out the reaction Exonucleolytic cleavage in either 5'- to 3'- or 3'- to 5'-direction to yield nucleoside 5'-phosphates.. Its function is as follows. Bidirectionally degrades single-stranded DNA into large acid-insoluble oligonucleotides, which are then degraded further into small acid-soluble oligonucleotides. This is Exodeoxyribonuclease 7 large subunit from Moorella thermoacetica (strain ATCC 39073 / JCM 9320).